The primary structure comprises 115 residues: Putative type I restriction enzyme MpnIIP endonuclease subunit middle part (115 aa).

Its function is as follows. The middle section of a putative type I restriction enzyme that if reconstituted might recognize 5'-GAN(7)TAY-3' and cleave a random distance away. Subunit R is required for both nuclease and ATPase activities, but not for modification. The sequence is that of Putative type I restriction enzyme MpnIIP endonuclease subunit middle part from Mycoplasma pneumoniae (strain ATCC 29342 / M129 / Subtype 1) (Mycoplasmoides pneumoniae).